Consider the following 486-residue polypeptide: N-succinylglutamate 5-semialdehyde dehydrogenase (486 aa).

221–226 (GSSATG) is a binding site for NAD(+). Residues E244 and C278 contribute to the active site.

It belongs to the aldehyde dehydrogenase family. AstD subfamily.

It carries out the reaction N-succinyl-L-glutamate 5-semialdehyde + NAD(+) + H2O = N-succinyl-L-glutamate + NADH + 2 H(+). It participates in amino-acid degradation; L-arginine degradation via AST pathway; L-glutamate and succinate from L-arginine: step 4/5. Its function is as follows. Catalyzes the NAD-dependent reduction of succinylglutamate semialdehyde into succinylglutamate. This Chromobacterium violaceum (strain ATCC 12472 / DSM 30191 / JCM 1249 / CCUG 213 / NBRC 12614 / NCIMB 9131 / NCTC 9757 / MK) protein is N-succinylglutamate 5-semialdehyde dehydrogenase.